Here is a 259-residue protein sequence, read N- to C-terminus: MSRTEASGWGFSLLQILLVLAGMVWKAREGFPIVDFLDTSGDTCSWLNPCIVPPALSCWNNWPWFALHLFLYTTQLVGLSAIILPPVYLIRMLGLSTALPLISLWVLHRRRRTGKGWATTFPPRHGEEAFLWRVLWFTGLAHVASFLVATAASFLGREDMAPWHLTNTLLGTPDCSYLPCSQIAERQARLRQINEMTGTSSGFFLAVALFSQHLEMNGARLGAGLLARLFFVSLIAGPAAGAADALLLRSAFMRTRRST.

The next 5 membrane-spanning stretches (helical) occupy residues 5–25 (EASG…GMVW), 64–84 (WFAL…AIIL), 87–107 (VYLI…LWVL), 134–154 (VLWF…AASF), and 221–241 (LGAG…PAAG).

The protein belongs to the ltmS family.

The protein resides in the membrane. Functionally, part of the gene cluster that mediates the biosynthesis of paspalitrems, indole-diterpene (IDT) mycotoxins that are potent tremorgens in mammals. The geranylgeranyl diphosphate (GGPP) synthase idtG is proposed to catalyze the first step in IDT biosynthesis via catalysis of a series of iterative condensations of isopentenyl diphosphate (IPP) with dimethylallyl diphosphate (DMAPP), geranyl diphosphate (GPP), and farnesyl diphosphate (FPP), to form GGPP. Condensation of indole-3-glycerol phosphate with GGPP by the prenyltransferase idtC then forms 3-geranylgeranylindole (3-GGI). Epoxidation of the two terminal alkenes of the geranylgeranyl moiety by the FAD-dependent monooxygenase idtM, and cyclization by the terpene cyclase idtB then leads to the production of paspaline. The cytochrome P450 monooxygenase idtP then catalyzes oxidative elimination of the pendant methyl group at C-12 of paspaline and generates the C-10 ketone to yield 13-desoxypaxilline. The cytochrome P450 monooxygenase idtQ may catalyze the C-13 oxidation of 13-desoxypaxilline to afford paxilline. Considering that both paspalicine and paxilline were detected in C.paspali, idtQ also catalyzes the formation of paspalinine from 13-desoxypaxilline via paspalicine as an intermediate. Finally, the alpha-prenyltransferase idtF prenylates paspalinine at the C-20 or the C-21 positions to yield paspalitrems A and C, respectively. The hydroxylation of paspalitrem A at C-32 by a still unknown oxidase affords paspalitrem B. The protein is Indole-diterpene biosynthesis cluster protein S of Claviceps paspali (Rye ergot fungus).